The following is a 325-amino-acid chain: Putative gluconeogenesis factor (325 aa).

It belongs to the gluconeogenesis factor family.

The protein localises to the cytoplasm. Required for morphogenesis under gluconeogenic growth conditions. The sequence is that of Putative gluconeogenesis factor from Streptococcus pyogenes serotype M3 (strain ATCC BAA-595 / MGAS315).